Consider the following 876-residue polypeptide: Alanine--tRNA ligase (876 aa).

The residue at position 74 (K74) is an N6-acetyllysine. The Zn(2+) site is built by H564, H568, C666, and H670.

It belongs to the class-II aminoacyl-tRNA synthetase family. As to quaternary structure, homotetramer. Requires Zn(2+) as cofactor.

The protein localises to the cytoplasm. It carries out the reaction tRNA(Ala) + L-alanine + ATP = L-alanyl-tRNA(Ala) + AMP + diphosphate. Its function is as follows. Catalyzes the attachment of alanine to tRNA(Ala) in a two-step reaction: alanine is first activated by ATP to form Ala-AMP and then transferred to the acceptor end of tRNA(Ala). Also edits incorrectly charged Ser-tRNA(Ala) and Gly-tRNA(Ala) via its editing domain. This Escherichia coli O9:H4 (strain HS) protein is Alanine--tRNA ligase.